The primary structure comprises 153 residues: Ribosomal RNA large subunit methyltransferase H (153 aa).

Residues Leu-71 and Gly-102 each contribute to the S-adenosyl-L-methionine site.

It belongs to the RNA methyltransferase RlmH family. As to quaternary structure, homodimer.

It localises to the cytoplasm. The catalysed reaction is pseudouridine(1915) in 23S rRNA + S-adenosyl-L-methionine = N(3)-methylpseudouridine(1915) in 23S rRNA + S-adenosyl-L-homocysteine + H(+). Specifically methylates the pseudouridine at position 1915 (m3Psi1915) in 23S rRNA. The polypeptide is Ribosomal RNA large subunit methyltransferase H (Anaeromyxobacter sp. (strain K)).